The following is a 481-amino-acid chain: WD repeat-containing protein 55 homolog (481 aa).

The interval 1 to 116 is disordered; it reads MHTHNHFKTP…NRDVETNFDL (116 aa). 3 stretches are compositionally biased toward acidic residues: residues 12–23, 31–46, and 68–81; these read DAEEVDDLDDEM, IEQEVLFESDSDDDGF, and DSFDPNAEDSDSDD. WD repeat units follow at residues 144–183, 188–227, 231–269, 272–311, 314–353, and 398–437; these read KLEDFVTDISFHPERNIIALATIIGDVHLYEYANEGNKLI, VHSKACRDVEFTEDGRNLLTCSKDKCVMVTDMETEKLKKL, AHDDAINTLHVLNENLFATGDDAGTVKLWDLRTKQHVFE, QIDDQVTQLLSNEQNTLLLATSADGYLTTFNIPGRKLYVQ, PYEEELNCMGIYRGDSKLVVGTSKGKLYSYNWGSFGYHCD, and QHNMPIEALDVNSTGELLASSSHNNDVRFWNVKYFEDFGD.

Belongs to the WD repeat WDR55 family.

The sequence is that of WD repeat-containing protein 55 homolog from Drosophila ananassae (Fruit fly).